We begin with the raw amino-acid sequence, 472 residues long: Endoplasmic reticulum oxidoreductin-2 (472 aa).

Positions 1 to 37 (MAETDVGSVKGKEKGSGKRWILLIGAIAAVLLAVVVA) are cleaved as a signal peptide. A glycan (N-linked (GlcNAc...) asparagine) is linked at Asn-44. Cystine bridges form between Cys-55–Cys-74, Cys-57–Cys-72, Cys-111–Cys-371, Cys-120–Cys-125, Cys-221–Cys-230, and Cys-374–Cys-377. 3 residues coordinate FAD: Arg-200, Thr-202, and Trp-213. FAD-binding residues include Ser-241 and His-244. Residue Asn-267 is glycosylated (N-linked (GlcNAc...) asparagine). 2 residues coordinate FAD: Arg-274 and Arg-281. Asn-364 carries N-linked (GlcNAc...) asparagine glycosylation.

This sequence belongs to the EROs family. In terms of assembly, may function both as a monomer and a homodimer. FAD is required as a cofactor. N-glycosylated.

The protein resides in the endoplasmic reticulum membrane. Essential oxidoreductase that oxidizes proteins in the endoplasmic reticulum to produce disulfide bonds. Acts by oxidizing directly PDI isomerase through a direct disulfide exchange. Does not act as a direct oxidant of folding substrate, but relies on PDI to transfer oxidizing equivalent. Does not oxidize all PDI related proteins, suggesting that it can discriminate between PDI and related proteins. Its reoxidation probably involves electron transfer to molecular oxygen via FAD. Acts independently of glutathione. May be responsible for a significant proportion of reactive oxygen species (ROS) in the cell, thereby being a source of oxidative stress. The sequence is that of Endoplasmic reticulum oxidoreductin-2 (AERO2) from Arabidopsis thaliana (Mouse-ear cress).